Consider the following 184-residue polypeptide: Cbp/p300-interacting transactivator 4 (184 aa).

Positions 18-28 (PSAAAAHGPHA) are enriched in low complexity. 2 disordered regions span residues 18–67 (PSAA…YGAF) and 94–128 (TPYPGRAAAPPNAPGGPPGPQPAPSAAAPPPPAHA). The span at 104-126 (PNAPGGPPGPQPAPSAAAPPPPA) shows a compositional bias: pro residues.

This sequence belongs to the CITED family. In terms of assembly, interacts via its C-terminal region with the CH1 domain of CREBBP and EP300. Interacts with all TFAP2/AP-2 isoforms. As to expression, expressed in most tissues examined with highest levels of expression in heart, liver, skeletal muscle and pancreas. Also expressed in bladder cell line ECV-304 and in various breast cancer cell lines. Also detected in both in situ and invasive breast tumors where its expression is down-regulated and mostly restricted to the cytoplasm of malignant epithelium. Down-regulation of expression is associated with elevated levels of HIF1A and increased tumor growth and angiogenesis.

It localises to the nucleus. The protein resides in the cytoplasm. In terms of biological role, acts as a transcriptional coactivator for TFAP2/AP-2. Enhances estrogen-dependent transactivation mediated by estrogen receptors. May function as an inhibitor of transactivation by HIF1A by disrupting HIF1A interaction with CREBBP. May be involved in regulation of gene expression during development and differentiation of blood cells, endothelial cells and mammary epithelial cells. The sequence is that of Cbp/p300-interacting transactivator 4 from Homo sapiens (Human).